The sequence spans 435 residues: Hyaluronidase-1 (435 aa).

An N-terminal signal peptide occupies residues 1–21 (MAAHLLPICALFLTLLDMAQG). 2 disulfides stabilise this stretch: Cys-43–Cys-333 and Cys-207–Cys-221. Asn-99 carries an N-linked (GlcNAc...) asparagine glycan. Catalysis depends on Glu-131, which acts as the Proton donor. 2 N-linked (GlcNAc...) asparagine glycosylation sites follow: Asn-216 and Asn-350. The EGF-like domain occupies 354 to 430 (GALLCSQALC…YPGWQAPWCE (77 aa)). 3 disulfide bridges follow: Cys-358–Cys-369, Cys-363–Cys-418, and Cys-420–Cys-429.

Belongs to the glycosyl hydrolase 56 family. As to expression, highly expressed in the liver, kidney and heart. Weakly expressed in lung, placenta and skeletal muscle. No expression detected in adult brain. Isoform 1 is expressed only in bladder and prostate cancer cells, G2/G3 bladder tumor tissues and lymph node specimens showing tumor invasive tumors cells. Isoform 3, isoform 4, isoform 5 and isoform 6 are expressed in normal bladder and bladder tumor tissues.

The protein resides in the secreted. Its subcellular location is the lysosome. It carries out the reaction Random hydrolysis of (1-&gt;4)-linkages between N-acetyl-beta-D-glucosamine and D-glucuronate residues in hyaluronate.. May have a role in promoting tumor progression. May block the TGFB1-enhanced cell growth. The protein is Hyaluronidase-1 (HYAL1) of Homo sapiens (Human).